The primary structure comprises 542 residues: Chaperonin GroEL 2 (542 aa).

ATP contacts are provided by residues 30–33 (TLGP), lysine 51, 87–91 (DGTTT), glycine 415, and aspartate 496.

It belongs to the chaperonin (HSP60) family. Forms a cylinder of 14 subunits composed of two heptameric rings stacked back-to-back. Interacts with the co-chaperonin GroES.

It is found in the cytoplasm. It carries out the reaction ATP + H2O + a folded polypeptide = ADP + phosphate + an unfolded polypeptide.. Together with its co-chaperonin GroES, plays an essential role in assisting protein folding. The GroEL-GroES system forms a nano-cage that allows encapsulation of the non-native substrate proteins and provides a physical environment optimized to promote and accelerate protein folding. This Sinorhizobium fredii (strain NBRC 101917 / NGR234) protein is Chaperonin GroEL 2.